The sequence spans 491 residues: MPALMVVGCTSHAGKSLITAAICRLLRRQGWRVAPFKGQNMALNAYVTASGGEIGYAQAFQAWAAGVEPTIEMNPILLKPQGDMTSQVVLKGRAVGRTLAERYYQDYFEVGWEAICEALEQLQADYDWIVCEGAGSPAEINLKHRDLTNLRVAKHLQAPTLLLVDIDRGGSFAHLIGTLELLDPDERSLIRGFVFNKFRGRRELLQSGLDWLEERTGIPVLGVIPWIDRAFPSEDSLDLMERRRRKTQAEVTIAVIRLPRIANFTDFDPLESEPSVQVRYVGLQDELGYPDAVILPGSKTTISDLLDLQRSGLAQAIRDYAAAGGTVLGICGGFQMMGQHILDLEGTEGIEGQFEGLHLFPTQTWFTAEKTLRQRQTTARSPQAGLPITGYEIHQGQTRLDSDSEEFLPIFDDPKLGLCDRNGNLWGTYLHGIFDNGAWRRAWLNSLRHRRGLKALPTSIGHYQAQRDDLIDALSDAVEPYLNLSPLLTAL.

One can recognise a GATase cobBQ-type domain in the interval 250 to 439 (EVTIAVIRLP…LHGIFDNGAW (190 aa)). The active-site Nucleophile is cysteine 331. The active site involves histidine 431.

The protein belongs to the CobB/CobQ family. CobQ subfamily.

The protein operates within cofactor biosynthesis; adenosylcobalamin biosynthesis. In terms of biological role, catalyzes amidations at positions B, D, E, and G on adenosylcobyrinic A,C-diamide. NH(2) groups are provided by glutamine, and one molecule of ATP is hydrogenolyzed for each amidation. The sequence is that of Cobyric acid synthase from Synechococcus sp. (strain ATCC 27144 / PCC 6301 / SAUG 1402/1) (Anacystis nidulans).